The primary structure comprises 264 residues: MDEATQSAIQFDVVTLFPEMFRALTDWGITSRAVKQGRFGLRTWNPRDFTTDNYRTVDDRPYGGGPGMVMLAKPLEAAIGAAKAAQAAQGVATSRVVMMSPQGAPLTHERVARMAAEPGVVLLCGRYEAIDQRLIDRCVDEELSLGDFVLSGGELPAMALMDAVVRLLPGVLNDAQSAVQDSFADGLLDCPHYTRPEEYEGVRVPDVLLGGHHAEIERWRRQEALRNTIAKRPDLIARARREKLLSRADEAWLASLAKEAKQAS.

Residues Gly-125 and 145-150 each bind S-adenosyl-L-methionine; that span reads LGDFVL.

It belongs to the RNA methyltransferase TrmD family. Homodimer.

Its subcellular location is the cytoplasm. The enzyme catalyses guanosine(37) in tRNA + S-adenosyl-L-methionine = N(1)-methylguanosine(37) in tRNA + S-adenosyl-L-homocysteine + H(+). In terms of biological role, specifically methylates guanosine-37 in various tRNAs. The sequence is that of tRNA (guanine-N(1)-)-methyltransferase from Burkholderia mallei (strain NCTC 10247).